We begin with the raw amino-acid sequence, 221 residues long: Histone H1.3 (221 aa).

The span at 1–17 shows a compositional bias: low complexity; it reads MSETAPVAPAAPAPAEK. Residues 1–42 form a disordered region; sequence MSETAPVAPAAPAPAEKTPVKKKAKKSGVAAGKRKASGPPVS. Position 2 is an N-acetylserine (Ser-2). Position 2 is a phosphoserine (Ser-2). Lys-17 is modified (N6-acetyllysine). The residue at position 18 (Thr-18) is a Phosphothreonine. The segment covering 20–36 has biased composition (basic residues); that stretch reads VKKKAKKSGVAAGKRKA. Residues Lys-35 and Lys-53 each carry the N6-(beta-hydroxybutyryl)lysine modification. The 74-residue stretch at 37–110 folds into the H15 domain; that stretch reads SGPPVSELIT…GASGSFKLNK (74 aa). Position 55 is a citrulline (Arg-55). N6-(beta-hydroxybutyryl)lysine occurs at positions 65, 86, and 91. Residues 87–221 are disordered; it reads SLVSKGTLVQ…KAKKAVSKKK (135 aa). A Phosphoserine; by PKC modification is found at Ser-105. Lys-107 bears the N6-(beta-hydroxybutyryl)lysine mark. Composition is skewed to basic residues over residues 120–141, 150–161, 170–187, and 194–221; these read KGKKAGAAKPKKAAGAAKKPKK, KAAKKTPKKVKK, KVAKSPKKAKAAKPKKPT, and KAPKPKAAKPKAAKPKATKAKKAVSKKK.

This sequence belongs to the histone H1/H5 family. In terms of processing, H1 histones are progressively phosphorylated during the cell cycle, becoming maximally phosphorylated during late G2 phase and M phase, and being dephosphorylated sharply thereafter. Post-translationally, citrullination at Arg-55 (H1R54ci) by PADI4 takes place within the DNA-binding site of H1 and results in its displacement from chromatin and global chromatin decondensation, thereby promoting pluripotency and stem cell maintenance.

The protein localises to the nucleus. It localises to the chromosome. Functionally, H1 histones bind to linker DNA between nucleosomes forming the macromolecular structure known as the chromatin fiber. H1 histones are necessary for the condensation of nucleosome chains into higher-order structured fibers. Also acts as a regulator of individual gene transcription through chromatin remodeling, nucleosome spacing and DNA methylation. This Bos taurus (Bovine) protein is Histone H1.3.